The following is a 364-amino-acid chain: Lipid-A-disaccharide synthase (364 aa).

The protein belongs to the LpxB family.

It carries out the reaction a lipid X + a UDP-2-N,3-O-bis[(3R)-3-hydroxyacyl]-alpha-D-glucosamine = a lipid A disaccharide + UDP + H(+). The protein operates within bacterial outer membrane biogenesis; LPS lipid A biosynthesis. Functionally, condensation of UDP-2,3-diacylglucosamine and 2,3-diacylglucosamine-1-phosphate to form lipid A disaccharide, a precursor of lipid A, a phosphorylated glycolipid that anchors the lipopolysaccharide to the outer membrane of the cell. The chain is Lipid-A-disaccharide synthase from Campylobacter jejuni (strain RM1221).